The following is a 340-amino-acid chain: Uroporphyrinogen decarboxylase (340 aa).

Substrate contacts are provided by residues 21–25, phenylalanine 40, aspartate 71, tyrosine 147, serine 202, and histidine 316; that span reads RQAGR.

It belongs to the uroporphyrinogen decarboxylase family. As to quaternary structure, homodimer.

It localises to the cytoplasm. The catalysed reaction is uroporphyrinogen III + 4 H(+) = coproporphyrinogen III + 4 CO2. It participates in porphyrin-containing compound metabolism; protoporphyrin-IX biosynthesis; coproporphyrinogen-III from 5-aminolevulinate: step 4/4. Catalyzes the decarboxylation of four acetate groups of uroporphyrinogen-III to yield coproporphyrinogen-III. This Wolinella succinogenes (strain ATCC 29543 / DSM 1740 / CCUG 13145 / JCM 31913 / LMG 7466 / NCTC 11488 / FDC 602W) (Vibrio succinogenes) protein is Uroporphyrinogen decarboxylase.